Here is a 470-residue protein sequence, read N- to C-terminus: Dihydrolipoyl dehydrogenase (470 aa).

FAD is bound by residues Glu39–Cys47, Lys56, and Ala119. A disulfide bridge links Cys47 with Cys52. NAD(+) is bound by residues Gly183–Ile187, Glu206, and Thr272–Arg275. The FAD site is built by Asp315 and Ala323. The Proton acceptor role is filled by His447.

It belongs to the class-I pyridine nucleotide-disulfide oxidoreductase family. As to quaternary structure, homodimer. Component of two multienzyme complexes: pyruvate dehydrogenase complex and oxoglutarate dehydrogenase complex. FAD is required as a cofactor.

It is found in the cytoplasm. It carries out the reaction N(6)-[(R)-dihydrolipoyl]-L-lysyl-[protein] + NAD(+) = N(6)-[(R)-lipoyl]-L-lysyl-[protein] + NADH + H(+). Catalyzes the oxidation of dihydrolipoamide to lipoamide. The polypeptide is Dihydrolipoyl dehydrogenase (pdhD) (Bacillus subtilis (strain 168)).